Consider the following 288-residue polypeptide: MAFRSRREKLRSILSGPGCIHPGSVYDAISIRIAEDLGFPLGMFGGSVASLAVLGDPDITLITLTELAEQMRRMSRASALPVLVDADHGYGNALNVRRTVQELETAGAAGLTIEDTLLPAAFGEAKTQLISLEEGVGKMKAALSGRSDPTLVIMGRTGAAAITSLDDTIRRAQAYEATGVDALFFTGIKSRAELEAVAAATHLPIVLGGAPEELNAPDYLAGQRVRIALQGHAPIAAATQAVHDTLKALREGAPPKALKGLASAELTSRVMREAETKARGADVLGFKK.

Ser47 lines the substrate pocket. Position 85 (Asp85) interacts with Mg(2+). Residues Arg156 and His232 each coordinate substrate.

The protein belongs to the isocitrate lyase/PEP mutase superfamily. Oxaloacetate decarboxylase family. Homotetramer; dimer of dimers. It depends on Mg(2+) as a cofactor.

The enzyme catalyses oxaloacetate + H(+) = pyruvate + CO2. Catalyzes the decarboxylation of oxaloacetate into pyruvate. Seems to play a role in maintaining cellular concentrations of bicarbonate and pyruvate. The chain is Oxaloacetate decarboxylase from Bradyrhizobium diazoefficiens (strain JCM 10833 / BCRC 13528 / IAM 13628 / NBRC 14792 / USDA 110).